A 413-amino-acid polypeptide reads, in one-letter code: Azaphilone biosynthesis cluster protein M (413 aa).

Residues 123 to 138 are compositionally biased toward polar residues; sequence STQPDQVQPNQPTPSF. The tract at residues 123–145 is disordered; that stretch reads STQPDQVQPNQPTPSFESAAGAS.

It participates in secondary metabolite biosynthesis. Part of the gene cluster that mediates the biosynthesis of azaterrilone A and other azaphilones, a class of fungal metabolites characterized by a highly oxygenated pyrano-quinone bicyclic core and exhibiting a broad range of bioactivities. The first step of the pathway begins with the non-reducing polyketide synthase tazA that assembles one acetyl-CoA starter unit, five malonyl-CoA units, and catalyzes a series of Claisen condensations, methylation, PT-mediated cyclization, and finally releases the first hexaketide precursor through the R-domain. The tazA product then undergoes reduction on its terminal ketone and the following pyran-ring formation by yet undetermined enzyme(s). Dehydration and enoyl reduction, possibly involving the trans-enoyl reductase tazE leads to the next intermediate. TazD is predicted as an acetyltransferase and might catalyze the acetylation steps leading to the synthesis of azaterrilone A. Azaterrilone A is not the final product of the taz pathway and both the highly reducing polyketide synthase tazB and the dual enzyme tazHJ catalyze late steps of the pathway, leading to the production of the 2 final stereoisomers that contain additional polyketide modification whose structures have still to be determined. This Aspergillus terreus (strain NIH 2624 / FGSC A1156) protein is Azaphilone biosynthesis cluster protein M.